The following is a 372-amino-acid chain: PqqA peptide cyclase (372 aa).

The Radical SAM core domain occupies 4 to 219 (APPPLSVLLE…VDTARRELGD (216 aa)). The [4Fe-4S] cluster site is built by Cys-18, Cys-22, and Cys-25. The disordered stretch occupies residues 342–372 (ATAEREAAAPAPEFIYRRPERPAPATADTLE).

It belongs to the radical SAM superfamily. PqqE family. In terms of assembly, interacts with PqqD. The interaction is necessary for activity of PqqE. [4Fe-4S] cluster serves as cofactor.

It carries out the reaction [PQQ precursor protein] + S-adenosyl-L-methionine = E-Y cross-linked-[PQQ precursor protein] + 5'-deoxyadenosine + L-methionine + H(+). Its pathway is cofactor biosynthesis; pyrroloquinoline quinone biosynthesis. Catalyzes the cross-linking of a glutamate residue and a tyrosine residue in the PqqA protein as part of the biosynthesis of pyrroloquinoline quinone (PQQ). This chain is PqqA peptide cyclase, found in Xanthomonas oryzae pv. oryzae (strain MAFF 311018).